We begin with the raw amino-acid sequence, 663 residues long: DNA topoisomerase 4 subunit B (663 aa).

ATP contacts are provided by residues Tyr-7, Asn-47, Asp-74, Gly-114–Ala-120, and Lys-341. Positions Arg-386–Ala-416 are disordered. Residues Glu-387 to Ser-398 are compositionally biased toward basic and acidic residues. The region spanning Asn-424–Pro-538 is the Toprim domain. Glu-430, Asp-503, and Asp-505 together coordinate Mg(2+).

This sequence belongs to the type II topoisomerase family. ParE type 2 subfamily. As to quaternary structure, heterotetramer composed of ParC and ParE. Requires Mg(2+) as cofactor. Mn(2+) serves as cofactor. Ca(2+) is required as a cofactor.

The enzyme catalyses ATP-dependent breakage, passage and rejoining of double-stranded DNA.. Functionally, topoisomerase IV is essential for chromosome segregation. It relaxes supercoiled DNA. Performs the decatenation events required during the replication of a circular DNA molecule. This Staphylococcus aureus (strain Mu50 / ATCC 700699) protein is DNA topoisomerase 4 subunit B.